We begin with the raw amino-acid sequence, 272 residues long: Shikimate dehydrogenase (NADP(+)) (272 aa).

Shikimate-binding positions include S14–S16 and T61. K65 functions as the Proton acceptor in the catalytic mechanism. E77 contributes to the NADP(+) binding site. Shikimate-binding residues include N86 and D102. NADP(+)-binding positions include G126 to A130, N149 to R154, and M213. Y215 contacts shikimate. G237 contacts NADP(+).

It belongs to the shikimate dehydrogenase family. As to quaternary structure, homodimer.

It carries out the reaction shikimate + NADP(+) = 3-dehydroshikimate + NADPH + H(+). It participates in metabolic intermediate biosynthesis; chorismate biosynthesis; chorismate from D-erythrose 4-phosphate and phosphoenolpyruvate: step 4/7. Involved in the biosynthesis of the chorismate, which leads to the biosynthesis of aromatic amino acids. Catalyzes the reversible NADPH linked reduction of 3-dehydroshikimate (DHSA) to yield shikimate (SA). In Shigella boydii serotype 4 (strain Sb227), this protein is Shikimate dehydrogenase (NADP(+)).